The following is a 284-amino-acid chain: Tropomyosin alpha-1 chain (284 aa).

The disordered stretch occupies residues 1-38; sequence MDAIKKKMQMLKLDKENALDRAEQAEADKKAAEERSKQ. Positions 1–284 form a coiled coil; the sequence is MDAIKKKMQM…DHALNDMTSI (284 aa). Basic and acidic residues predominate over residues 12 to 38; it reads KLDKENALDRAEQAEADKKAAEERSKQ.

Belongs to the tropomyosin family. Homodimer. Heterodimer of an alpha (TPM1, TPM3 or TPM4) and a beta (TPM2) chain. Interacts with HRG (via the HRR domain); the interaction contributes to the antiangiogenic properties of the histidine/proline-rich region (HRR) of HRG.

The protein localises to the cytoplasm. It localises to the cytoskeleton. In terms of biological role, binds to actin filaments in muscle and non-muscle cells. Plays a central role, in association with the troponin complex, in the calcium dependent regulation of vertebrate striated muscle contraction. Smooth muscle contraction is regulated by interaction with caldesmon. In non-muscle cells is implicated in stabilizing cytoskeleton actin filaments. This Coturnix japonica (Japanese quail) protein is Tropomyosin alpha-1 chain (TPM1).